Here is a 113-residue protein sequence, read N- to C-terminus: Beta-defensin 112 (113 aa).

3 cysteine pairs are disulfide-bonded: cysteine 54–cysteine 82, cysteine 61–cysteine 75, and cysteine 65–cysteine 83.

It belongs to the beta-defensin family.

It localises to the secreted. Functionally, has antibacterial activity. The chain is Beta-defensin 112 (DEFB112) from Pan troglodytes (Chimpanzee).